A 210-amino-acid chain; its full sequence is Thymidylate kinase (210 aa).

Residue 11–18 participates in ATP binding; the sequence is GLEGAGKS.

This sequence belongs to the thymidylate kinase family.

It catalyses the reaction dTMP + ATP = dTDP + ADP. In terms of biological role, phosphorylation of dTMP to form dTDP in both de novo and salvage pathways of dTTP synthesis. This is Thymidylate kinase from Histophilus somni (strain 129Pt) (Haemophilus somnus).